Reading from the N-terminus, the 96-residue chain is Co-chaperonin GroES (96 aa).

Belongs to the GroES chaperonin family. In terms of assembly, heptamer of 7 subunits arranged in a ring. Interacts with the chaperonin GroEL.

The protein localises to the cytoplasm. In terms of biological role, together with the chaperonin GroEL, plays an essential role in assisting protein folding. The GroEL-GroES system forms a nano-cage that allows encapsulation of the non-native substrate proteins and provides a physical environment optimized to promote and accelerate protein folding. GroES binds to the apical surface of the GroEL ring, thereby capping the opening of the GroEL channel. In Chromohalobacter salexigens (strain ATCC BAA-138 / DSM 3043 / CIP 106854 / NCIMB 13768 / 1H11), this protein is Co-chaperonin GroES.